Reading from the N-terminus, the 393-residue chain is 2,3,4,5-tetrahydropyridine-2,6-dicarboxylate N-succinyltransferase (393 aa).

The active-site Acyl-anhydride intermediate is the E261. Succinyl-CoA is bound by residues R263, G278, S281, A304, 319–320 (DA), G327, K356, and 369–372 (RQDS).

This sequence belongs to the type 2 tetrahydrodipicolinate N-succinyltransferase family. Homotrimer.

Its subcellular location is the cytoplasm. It catalyses the reaction (S)-2,3,4,5-tetrahydrodipicolinate + succinyl-CoA + H2O = (S)-2-succinylamino-6-oxoheptanedioate + CoA. It functions in the pathway amino-acid biosynthesis; L-lysine biosynthesis via DAP pathway; LL-2,6-diaminopimelate from (S)-tetrahydrodipicolinate (succinylase route): step 1/3. In terms of biological role, catalyzes the conversion of the cyclic tetrahydrodipicolinate (THDP) into the acyclic N-succinyl-L-2-amino-6-oxopimelate using succinyl-CoA. In Nitratiruptor sp. (strain SB155-2), this protein is 2,3,4,5-tetrahydropyridine-2,6-dicarboxylate N-succinyltransferase.